A 1068-amino-acid polypeptide reads, in one-letter code: DNA-directed RNA polymerase subunit beta (1068 aa).

It belongs to the RNA polymerase beta chain family. In terms of assembly, in plastids the minimal PEP RNA polymerase catalytic core is composed of four subunits: alpha, beta, beta', and beta''. When a (nuclear-encoded) sigma factor is associated with the core the holoenzyme is formed, which can initiate transcription.

It localises to the plastid. The protein resides in the chloroplast. It carries out the reaction RNA(n) + a ribonucleoside 5'-triphosphate = RNA(n+1) + diphosphate. DNA-dependent RNA polymerase catalyzes the transcription of DNA into RNA using the four ribonucleoside triphosphates as substrates. The polypeptide is DNA-directed RNA polymerase subunit beta (Staurastrum punctulatum (Green alga)).